A 66-amino-acid chain; its full sequence is Cell division protein ZapB (66 aa).

Residues 3-59 adopt a coiled-coil conformation; the sequence is LELLSQLETKIQATLENIELLKMELEEEKQKSTQLAEKNQKLQQDLNSWSDKVNGLV.

It belongs to the ZapB family. As to quaternary structure, homodimer. The ends of the coiled-coil dimer bind to each other, forming polymers. Interacts with FtsZ.

It is found in the cytoplasm. Non-essential, abundant cell division factor that is required for proper Z-ring formation. It is recruited early to the divisome by direct interaction with FtsZ, stimulating Z-ring assembly and thereby promoting cell division earlier in the cell cycle. Its recruitment to the Z-ring requires functional FtsA or ZipA. The protein is Cell division protein ZapB of Shewanella denitrificans (strain OS217 / ATCC BAA-1090 / DSM 15013).